Reading from the N-terminus, the 496-residue chain is Iroquois-class homeodomain protein irx-4 (496 aa).

Positions 141–203 (GSTRRKNATR…NARRRLKKEN (63 aa)) form a DNA-binding region, homeobox; TALE-type. The tract at residues 203–236 (NKMTWPPRNKCSDEKRPYDEEEEEEEEEDSQKAT) is disordered. Residues 221–231 (DEEEEEEEEED) show a composition bias toward acidic residues.

This sequence belongs to the TALE/IRO homeobox family. Expressed in the neural plate in overlapping patterns with other irx members, which all share an anterior border of expression. Broadly expressed in the tailbud rhombencephalon (hindbrain). Outside the nervous system and at tailbud stages, expressed in the developing otic vesicle, branchial arches and prospective heart region.

The protein resides in the nucleus. In terms of biological role, acts partially redundantly with other irx members in neural patterning. Required for formation of the posterior forebrain, midbrain, hindbrain, and to a lesser extent, spinal cord. Patterns the neuroectoderm in both the anterior/posterior and dorsal/ventral axes. Does not appear to play a role in pronephros kidney development. The chain is Iroquois-class homeodomain protein irx-4 from Xenopus tropicalis (Western clawed frog).